The chain runs to 251 residues: Small ribosomal subunit protein uS2 (251 aa).

This sequence belongs to the universal ribosomal protein uS2 family.

The polypeptide is Small ribosomal subunit protein uS2 (Aromatoleum aromaticum (strain DSM 19018 / LMG 30748 / EbN1) (Azoarcus sp. (strain EbN1))).